The sequence spans 180 residues: Major urinary protein 17 (180 aa).

A signal peptide spans methionine 1–alanine 18. An intrachain disulfide couples cysteine 82 to cysteine 175.

The protein belongs to the calycin superfamily. Lipocalin family. In terms of tissue distribution, because of their involvement in the coordination of social behavior, Mup proteins are thought to exhibit variable expression depending upon gender, age and status of the studied individuals. Expression may also be strain-specific: in strains C57BL/6J and 129S7, transcriptional support is lacking for Mup17.

The protein localises to the secreted. In terms of biological role, major urinary proteins (Mups) bind pheromones, thus stabilize them and allow slow release into the air from urine marks. May protect pheromones from oxidation. May also act as pheromones themselves. In this context, they play a role in the regulation of social behaviors, such as aggression, mating, pup-suckling, territory establishment and dominance. The polypeptide is Major urinary protein 17 (Mup17) (Mus musculus (Mouse)).